The chain runs to 112 residues: cAMP-regulated phosphoprotein 19 (112 aa).

Positions 1–11 (MSAESPEPASA) are enriched in low complexity. The tract at residues 1–48 (MSAESPEPASAEEQKEMEDKVISPEKAEEAKLKARYPHLGQKPGGSDF) is disordered. An N-acetylserine modification is found at S2. A compositionally biased stretch (basic and acidic residues) spans 12–32 (EEQKEMEDKVISPEKAEEAKL). Phosphoserine; by GWL occurs at positions 62 and 104. Positions 73-112 (KNKQLPTAAPDKTEVTGDHIPTPQDLPQRKPSLVASKLAG) are disordered. At S104 the chain carries Phosphoserine; by PKA.

It belongs to the endosulfine family. As to quaternary structure, interacts (when phosphorylated at Ser-62) with PPP2R2D. Post-translationally, phosphorylation at Ser-62 by MASTL/GWL during mitosis is essential for interaction with PPP2R2D (PR55-delta) and subsequent inactivation of PP2A.

The protein resides in the cytoplasm. In terms of biological role, protein phosphatase inhibitor that specifically inhibits protein phosphatase 2A (PP2A) during mitosis. Inhibition of PP2A is enhanced when ARPP19 is phosphorylated. When phosphorylated at Ser-62 during mitosis, specifically interacts with PPP2R2D (PR55-delta) and inhibits its activity, leading to inactivation of PP2A, an essential condition to keep cyclin-B1-CDK1 activity high during M phase. This Gallus gallus (Chicken) protein is cAMP-regulated phosphoprotein 19 (ARPP19).